The chain runs to 558 residues: Arginine--tRNA ligase (558 aa).

The short motif at 134 to 144 (ANPTGPMVLVQ) is the 'HIGH' region element.

Belongs to the class-I aminoacyl-tRNA synthetase family. In terms of assembly, monomer.

It localises to the cytoplasm. It carries out the reaction tRNA(Arg) + L-arginine + ATP = L-arginyl-tRNA(Arg) + AMP + diphosphate. The protein is Arginine--tRNA ligase of Symbiobacterium thermophilum (strain DSM 24528 / JCM 14929 / IAM 14863 / T).